Consider the following 85-residue polypeptide: UPF0291 protein SEQ_0545 (85 aa).

Positions 62-85 are disordered; that stretch reads TPEKLRQVQREKGLHGRSLDDPES.

This sequence belongs to the UPF0291 family.

It localises to the cytoplasm. This Streptococcus equi subsp. equi (strain 4047) protein is UPF0291 protein SEQ_0545.